A 125-amino-acid chain; its full sequence is ATP synthase epsilon chain (125 aa).

Belongs to the ATPase epsilon chain family. In terms of assembly, F-type ATPases have 2 components, CF(1) - the catalytic core - and CF(0) - the membrane proton channel. CF(1) has five subunits: alpha(3), beta(3), gamma(1), delta(1), epsilon(1). CF(0) has three main subunits: a, b and c.

The protein localises to the cell inner membrane. Its function is as follows. Produces ATP from ADP in the presence of a proton gradient across the membrane. The chain is ATP synthase epsilon chain from Aliarcobacter butzleri (strain RM4018) (Arcobacter butzleri).